Reading from the N-terminus, the 274-residue chain is Undecaprenyl-diphosphatase 2 (274 aa).

6 helical membrane passes run 47–64, 82–102, 110–130, 185–205, 219–239, and 249–269; these read VFVI…CWEY, WKFV…GLTF, LFSP…ILWA, ATEF…LYDL, LMAV…RGLI, and VFAW…WSGL.

The protein belongs to the UppP family.

The protein resides in the cell inner membrane. The catalysed reaction is di-trans,octa-cis-undecaprenyl diphosphate + H2O = di-trans,octa-cis-undecaprenyl phosphate + phosphate + H(+). In terms of biological role, catalyzes the dephosphorylation of undecaprenyl diphosphate (UPP). Confers resistance to bacitracin. This is Undecaprenyl-diphosphatase 2 from Rhodospirillum rubrum (strain ATCC 11170 / ATH 1.1.1 / DSM 467 / LMG 4362 / NCIMB 8255 / S1).